The primary structure comprises 327 residues: Clavesin-2 (327 aa).

Residues isoleucine 96–aspartate 257 form the CRAL-TRIO domain. The segment at valine 288–aspartate 327 is disordered. Serine 325 carries the post-translational modification Phosphoserine.

In terms of assembly, forms a complex with clathrin heavy chain and gamma-adaptin. Expressed in brain with no expression detected in non-neuronal tissues (at protein level).

It is found in the golgi apparatus. It localises to the trans-Golgi network membrane. The protein resides in the early endosome membrane. The protein localises to the cytoplasmic vesicle. Its subcellular location is the clathrin-coated vesicle. In terms of biological role, required for normal morphology of late endosomes and/or lysosomes in neurons. Binds phosphatidylinositol 3,5-bisphosphate (PtdIns(3,5)P2). In Rattus norvegicus (Rat), this protein is Clavesin-2.